The primary structure comprises 540 residues: Protein PALS2 (540 aa).

L27 domains lie at 1–48 (MQQV…EDSK) and 49–107 (LEAV…YDSP). Positions 130 to 209 (ILGIHKRAGE…SVTLKILPSY (80 aa)) constitute a PDZ domain. Residues 215-284 (PQQVFVKCHF…PSQFLEEKRK (70 aa)) enclose the SH3 domain. The 188-residue stretch at 338–525 (RKTLVLIGAQ…AFEKLQTAIE (188 aa)) folds into the Guanylate kinase-like domain. Tyrosine 500 carries the phosphotyrosine modification.

Belongs to the MAGUK family. In terms of assembly, interacts with CADM1. Interacts with the LIN7 proteins. In terms of tissue distribution, abundant in testis, brain, and kidney with lower levels detectable in other tissues.

The protein localises to the membrane. This Homo sapiens (Human) protein is Protein PALS2.